Here is a 223-residue protein sequence, read N- to C-terminus: Ion-translocating oxidoreductase complex subunit E (223 aa).

Helical transmembrane passes span 17-37 (SLVQLLGLCPILAMTTNTINA), 38-58 (IGLGITTTFVLTITNSIISIL), 68-88 (IPIYMIIVSSTVTCIEMLLHA), 91-111 (FNLYQSLGVFIPLIVTNCIVV), 124-144 (VISFLDGMSIGLGSTFAMFVI), 156-176 (FLFGANKIFNVLDHSFFFTFI), and 181-201 (TIILAMLPSGGFLVLGFVIAF).

Belongs to the NqrDE/RnfAE family. As to quaternary structure, the complex is composed of six subunits: RnfA, RnfB, RnfC, RnfD, RnfE and RnfG.

The protein resides in the cell inner membrane. In terms of biological role, part of a membrane-bound complex that couples electron transfer with translocation of ions across the membrane. The chain is Ion-translocating oxidoreductase complex subunit E from Buchnera aphidicola subsp. Schizaphis graminum (strain Sg).